The primary structure comprises 134 residues: Snaclec alboaggregin-A subunit alpha' (134 aa).

One can recognise a C-type lectin domain in the interval 1 to 134; the sequence is DFHCLPGWSA…NPFVCKFPPQ (134 aa). 3 disulfides stabilise this stretch: Cys4/Cys15, Cys32/Cys129, and Cys104/Cys121.

The protein belongs to the snaclec family. As to quaternary structure, heterotetramer of the subunits alpha, alpha', beta and beta'; disulfide-linked. As to expression, expressed by the venom gland.

The protein resides in the secreted. Its function is as follows. Potent platelet activator that aggregates platelets via both GPIbalpha (GP1BA) and GPVI (GP6). Induces a tyrosine phosphorylation profile in platelets that resembles this produced by collagen, involving the time dependent tyrosine phosphorylation of Fc receptor gamma chain (FCGR1A), phospholipase Cgamma2 (PLCG2), and LAT. The polypeptide is Snaclec alboaggregin-A subunit alpha' (Trimeresurus albolabris (White-lipped pit viper)).